We begin with the raw amino-acid sequence, 642 residues long: MAKILGIDLGTTNSCMAVMEGGQGTVLENSEGARTTPSIVAFTKSGERLVGQAAKRQAVTNPKNTVFSSKRLIGRKYSELTEEDKKVPYEIVEAPNGDAYIRVDVGGEKKTFSPQEIASMVLAKLKADAESKLGETITEAVITVPAYFNDAQRNATKAAGEIAGLKVRRIINEPTAAALAYGLDKKSNENIAVYDLGGGTFDISVLEIGDGVFEVKASDGDTHLGGDDWDNAIINWIIGEFKKDSGMDLSNQPDAIQRIKEEAEKAKIALSSTQSYDISLPFITADASGPKHIQLTLSRPKLEQLTEDLLDRTRKPVLDCIAASGLKTGDIDELVLVGGMTRMPAVQEMAHTLAGKEPHKGVNPDEVVALGAAIQGGVLQGDVNDVLLLDVTPLTLSIETMGGIATPMIERNTTIPVRKSQVFSTAADNQPAVDIRICQGERKMFEDNKLLGNFKLDGISPAPRGVPQIEVTFDIDANGILHVSAKDKGTGKEQKISIQGSSGLSKDEIERAKRDAEAHAEEDKKRAEEIDTINQADSLCFSVERQLKDMGDKLPADLKREIEDKVTRLKEAVSKKDVTAIKAGKEDLESRLEALYKAAEAAQQSAGAAGPMPGAPAEEEPSDGPRKAKGRVVDAEIVDDDK.

Position 200 is a phosphothreonine; by autocatalysis (Thr200). Positions 600 to 616 (EAAQQSAGAAGPMPGAP) are enriched in low complexity. A disordered region spans residues 600 to 642 (EAAQQSAGAAGPMPGAPAEEEPSDGPRKAKGRVVDAEIVDDDK). Positions 623 to 634 (DGPRKAKGRVVD) are enriched in basic and acidic residues.

The protein belongs to the heat shock protein 70 family.

Acts as a chaperone. The sequence is that of Chaperone protein DnaK from Akkermansia muciniphila (strain ATCC BAA-835 / DSM 22959 / JCM 33894 / BCRC 81048 / CCUG 64013 / CIP 107961 / Muc).